The following is a 143-amino-acid chain: Ribonuclease H (143 aa).

Residues 1–136 (MQEIEIFCDG…CDSLAKLEAQ (136 aa)) enclose the RNase H type-1 domain. Mg(2+) contacts are provided by aspartate 9, glutamate 47, aspartate 69, and aspartate 128.

This sequence belongs to the RNase H family. In terms of assembly, monomer. It depends on Mg(2+) as a cofactor.

It is found in the cytoplasm. It catalyses the reaction Endonucleolytic cleavage to 5'-phosphomonoester.. In terms of biological role, endonuclease that specifically degrades the RNA of RNA-DNA hybrids. This chain is Ribonuclease H, found in Helicobacter pylori (strain HPAG1).